The chain runs to 142 residues: Large ribosomal subunit protein uL13 (142 aa).

Belongs to the universal ribosomal protein uL13 family. As to quaternary structure, part of the 50S ribosomal subunit.

This protein is one of the early assembly proteins of the 50S ribosomal subunit, although it is not seen to bind rRNA by itself. It is important during the early stages of 50S assembly. The chain is Large ribosomal subunit protein uL13 from Salmonella agona (strain SL483).